The primary structure comprises 462 residues: Glutamate--tRNA ligase 1 (462 aa).

The 'HIGH' region motif lies at 8–18 (PSPTGYLHIGG). The short motif at 236–240 (KLSKR) is the 'KMSKS' region element. Residue Lys-239 coordinates ATP.

The protein belongs to the class-I aminoacyl-tRNA synthetase family. Glutamate--tRNA ligase type 1 subfamily. Monomer.

The protein resides in the cytoplasm. It catalyses the reaction tRNA(Glu) + L-glutamate + ATP = L-glutamyl-tRNA(Glu) + AMP + diphosphate. Functionally, catalyzes the attachment of glutamate to tRNA(Glu) in a two-step reaction: glutamate is first activated by ATP to form Glu-AMP and then transferred to the acceptor end of tRNA(Glu). This chain is Glutamate--tRNA ligase 1, found in Sulfurovum sp. (strain NBC37-1).